A 363-amino-acid polypeptide reads, in one-letter code: NAD(P)H-quinone oxidoreductase subunit 1, chloroplastic (363 aa).

6 consecutive transmembrane segments (helical) span residues 26-46, 98-118, 127-147, 253-273, 300-320, and 336-356; these read IIWVLIPIFTPVLGITIGVLV, FSIGPSIAVISILLSYLVIPF, LSIGVFLWIAISSIAPVGLLM, FGLFYVASYLNLLVSSLFVTV, VFGTIIGIFITLAKTYLFLFI, and LLNLGWKFLLPISLGNLLLTT.

Belongs to the complex I subunit 1 family. NDH is composed of at least 16 different subunits, 5 of which are encoded in the nucleus.

The protein resides in the plastid. It is found in the chloroplast thylakoid membrane. It catalyses the reaction a plastoquinone + NADH + (n+1) H(+)(in) = a plastoquinol + NAD(+) + n H(+)(out). The catalysed reaction is a plastoquinone + NADPH + (n+1) H(+)(in) = a plastoquinol + NADP(+) + n H(+)(out). In terms of biological role, NDH shuttles electrons from NAD(P)H:plastoquinone, via FMN and iron-sulfur (Fe-S) centers, to quinones in the photosynthetic chain and possibly in a chloroplast respiratory chain. The immediate electron acceptor for the enzyme in this species is believed to be plastoquinone. Couples the redox reaction to proton translocation, and thus conserves the redox energy in a proton gradient. The chain is NAD(P)H-quinone oxidoreductase subunit 1, chloroplastic from Helianthus annuus (Common sunflower).